Reading from the N-terminus, the 358-residue chain is UDP-N-acetylglucosamine--N-acetylmuramyl-(pentapeptide) pyrophosphoryl-undecaprenol N-acetylglucosamine transferase (358 aa).

UDP-N-acetyl-alpha-D-glucosamine contacts are provided by serine 196 and glutamine 287.

It belongs to the glycosyltransferase 28 family. MurG subfamily.

The protein resides in the cell membrane. It catalyses the reaction Mur2Ac(oyl-L-Ala-gamma-D-Glu-L-Lys-D-Ala-D-Ala)-di-trans,octa-cis-undecaprenyl diphosphate + UDP-N-acetyl-alpha-D-glucosamine = beta-D-GlcNAc-(1-&gt;4)-Mur2Ac(oyl-L-Ala-gamma-D-Glu-L-Lys-D-Ala-D-Ala)-di-trans,octa-cis-undecaprenyl diphosphate + UDP + H(+). The protein operates within cell wall biogenesis; peptidoglycan biosynthesis. Cell wall formation. Catalyzes the transfer of a GlcNAc subunit on undecaprenyl-pyrophosphoryl-MurNAc-pentapeptide (lipid intermediate I) to form undecaprenyl-pyrophosphoryl-MurNAc-(pentapeptide)GlcNAc (lipid intermediate II). This chain is UDP-N-acetylglucosamine--N-acetylmuramyl-(pentapeptide) pyrophosphoryl-undecaprenol N-acetylglucosamine transferase, found in Streptococcus uberis (strain ATCC BAA-854 / 0140J).